A 482-amino-acid chain; its full sequence is tRNA sulfurtransferase (482 aa).

Residues 61-165 enclose the THUMP domain; it reads QQVLEILTTT…DDKLNQILAH (105 aa). ATP is bound by residues 183 to 184, K265, G287, and Q296; that span reads LI. A disulfide bridge links C344 with C456. One can recognise a Rhodanese domain in the interval 404–482; sequence IEEHAVVLDI…GFNNVKVYRP (79 aa). The Cysteine persulfide intermediate role is filled by C456.

The protein belongs to the ThiI family.

The protein resides in the cytoplasm. The enzyme catalyses [ThiI sulfur-carrier protein]-S-sulfanyl-L-cysteine + a uridine in tRNA + 2 reduced [2Fe-2S]-[ferredoxin] + ATP + H(+) = [ThiI sulfur-carrier protein]-L-cysteine + a 4-thiouridine in tRNA + 2 oxidized [2Fe-2S]-[ferredoxin] + AMP + diphosphate. It carries out the reaction [ThiS sulfur-carrier protein]-C-terminal Gly-Gly-AMP + S-sulfanyl-L-cysteinyl-[cysteine desulfurase] + AH2 = [ThiS sulfur-carrier protein]-C-terminal-Gly-aminoethanethioate + L-cysteinyl-[cysteine desulfurase] + A + AMP + 2 H(+). Its pathway is cofactor biosynthesis; thiamine diphosphate biosynthesis. In terms of biological role, catalyzes the ATP-dependent transfer of a sulfur to tRNA to produce 4-thiouridine in position 8 of tRNAs, which functions as a near-UV photosensor. Also catalyzes the transfer of sulfur to the sulfur carrier protein ThiS, forming ThiS-thiocarboxylate. This is a step in the synthesis of thiazole, in the thiamine biosynthesis pathway. The sulfur is donated as persulfide by IscS. The sequence is that of tRNA sulfurtransferase from Vibrio vulnificus (strain YJ016).